The chain runs to 62 residues: Andropin (62 aa).

A signal peptide spans 1 to 22 (MKYFSVLVVLTLILAIVDQSDA).

This sequence belongs to the andropin family. As to expression, ejaculatory duct of adult males.

It is found in the secreted. Male-specific peptide with moderate activity against Gram-positive bacteria. The polypeptide is Andropin (Anp) (Drosophila teissieri (Fruit fly)).